Here is a 1470-residue protein sequence, read N- to C-terminus: Membrane-associated guanylate kinase, WW and PDZ domain-containing protein 3 (1470 aa).

The PDZ 1 domain occupies 18-108; the sequence is CAVSWAGPPG…PIRLKTVKPG (91 aa). The tract at residues 18-108 is interaction with ADRB1 and TGFA; that stretch reads CAVSWAGPPG…PIRLKTVKPG (91 aa). Residues 116-290 form the Guanylate kinase-like domain; it reads RHYLSLQFQK…RSMDFRNYMM (175 aa). 123-130 contacts ATP; the sequence is FQKGSIDH. A disordered region spans residues 184–266; the sequence is TYDGNFYGTP…ETREMHSESS (83 aa). The segment covering 193 to 204 has biased composition (pro residues); that stretch reads PKPPAEPSPFQP. Position 236 is a phosphoserine (Ser-236). The segment covering 238 to 247 has biased composition (acidic residues); that stretch reads LPEEEEDEDK. WW domains follow at residues 296–329 and 342–375; these read EPLP…DPRL and GELP…NPVE. In terms of domain architecture, PDZ 2 spans 413 to 495; it reads RASLKKSTMG…NQYVNLTLCR (83 aa). The interval 413-495 is interaction with PTEN; sequence RASLKKSTMG…NQYVNLTLCR (83 aa). The segment at 550–575 is disordered; the sequence is LLSSDRLNGPSDSNEQRASLASSGSS. A compositionally biased stretch (polar residues) spans 559–575; the sequence is PSDSNEQRASLASSGSS. The region spanning 581 to 657 is the PDZ 3 domain; the sequence is TIPLVKGPKG…GADVPLLILR (77 aa). The residue at position 598 (Ser-598) is a Phosphoserine. Residues 665-700 are disordered; the sequence is KTAKMKTDTKETSGSLETINEPTPQPMPFPPSIIRS. A compositionally biased stretch (polar residues) spans 676 to 686; the sequence is TSGSLETINEP. Ser-702 is modified (phosphoserine). The PDZ 4 domain maps to 729–811; the sequence is DVFLRKQESG…NGHVLLTVRR (83 aa). The interval 729-811 is interaction with ADGRB1; that stretch reads DVFLRKQESG…NGHVLLTVRR (83 aa). A disordered region spans residues 818 to 847; sequence KQPEDESPQAFSQSGSPRLNRTELPTRSAP. Positions 826-847 are enriched in polar residues; that stretch reads QAFSQSGSPRLNRTELPTRSAP. Phosphoserine occurs at positions 833 and 916. A PDZ 5 domain is found at 852-939; the sequence is DVILQRKENE…TVTLTVVAEE (88 aa). Positions 852–939 are interaction with LPAR2 and GRIN2B; the sequence is DVILQRKENE…TVTLTVVAEE (88 aa). The disordered stretch occupies residues 939–976; that stretch reads EEHHGPPSGTNSARQSPALQHRPMGQAQATHIPGDRTA. Residues 946–956 are compositionally biased toward polar residues; it reads SGTNSARQSPA. Residues 1022 to 1104 form the PDZ 6 domain; the sequence is PVELERGPRG…KVLLLLRPGT (83 aa). Disordered stretches follow at residues 1124-1146 and 1167-1470; these read IYDE…ESHV and DTVQ…DKQL. Polar residues predominate over residues 1175–1191; sequence TLNGSQPEMKYQSIQKN. Composition is skewed to basic and acidic residues over residues 1193–1209 and 1230–1263; these read SKKD…KNLL and RHSE…KGEN. Polar residues predominate over residues 1285–1304; the sequence is SSSPRKQQKIGGNSLSNTEG. A Phosphoserine modification is found at Ser-1321. Basic and acidic residues-rich tracts occupy residues 1326-1340, 1350-1361, 1377-1397, and 1422-1431; these read PEGK…KDLK, RSPEKRSSKVDE, VSEK…DKTG, and EVTDRGKERA.

It belongs to the MAGUK family. Interacts with ADRB1, ADGRB1, LPAR2/EDG4, FZD4, FZD7, GRIN2B, TGFA and VANGL2. Interacts with PTEN. Interacts with ADRB1, PTPRB and unidentified tyrosine phosphorylated proteins. Interacts with DLL1. Interacts with PRRG4 (via cytoplasmic domain).

It is found in the cell membrane. Its subcellular location is the cell junction. The protein localises to the tight junction. The protein resides in the nucleus. Its function is as follows. Acts as a scaffolding protein at cell-cell junctions, thereby regulating various cellular and signaling processes. Cooperates with PTEN to modulate the kinase activity of AKT1. Its interaction with PTPRB and tyrosine phosphorylated proteins suggests that it may link receptor tyrosine phosphatase with its substrates at the plasma membrane. In polarized epithelial cells, involved in efficient trafficking of TGFA to the cell surface. Regulates the ability of LPAR2 to activate ERK and RhoA pathways. Regulates the JNK signaling cascade via its interaction with FZD4 and VANGL2. The chain is Membrane-associated guanylate kinase, WW and PDZ domain-containing protein 3 (Magi3) from Rattus norvegicus (Rat).